The chain runs to 176 residues: F(420)H(2) dehydrogenase subunit J (176 aa).

5 consecutive transmembrane segments (helical) span residues 13-33, 39-59, 64-84, 99-119, and 140-160; these read TAVFGLLALVTVFFAIFVVIA, AGLALIMCMFGVAGLYILLNA, VIQVLVYIGAIGVLILFAVML, PLAFLVCLLFVAVVVTGAFGT, and IGMLIFTHFVAPFEVLSIVLL.

It belongs to the complex I subunit 6 family. In terms of assembly, the FPO complex is composed of at least 13 different subunits. FpoA, FpoH, FpoJ, FpoK, FpoL, FpoM and FpoN proteins constitute the membrane sector of the complex.

Its subcellular location is the cell membrane. It catalyses the reaction methanophenazine + reduced coenzyme F420-(gamma-L-Glu)(n) = dihydromethanophenazine + oxidized coenzyme F420-(gamma-L-Glu)(n) + H(+). Component of the F(420)H(2) dehydrogenase (FPO complex) which is part of the energy-conserving F(420)H(2):heterodisulfide oxidoreductase system. The membrane-bound electron transfer system of the complex plays an important role in the metabolism of methylotrophic methanogens when the organisms grow on methanol or methylamines. Catalyzes the oxidation of methanophenazine to dihydromethanophenazine. It shuttles electrons from F(420)H(2), via FAD and iron-sulfur (Fe-S) centers, to methanophenazine (an electron carrier in the membrane). It couples the redox reaction to proton translocation (for every two electrons transferred, two hydrogen ions are translocated across the cytoplasmic membrane), and thus conserves the redox energy in a proton gradient. It also catalyzes the oxidation of F(420)H(2) with quinones such as 2,3-dimethyl-1,4-naphthoquinone, 2-methyl-1,4-naphthoquinone and tetramethyl-p-benzoquinone. This chain is F(420)H(2) dehydrogenase subunit J (fpoJ), found in Methanosarcina mazei (strain ATCC BAA-159 / DSM 3647 / Goe1 / Go1 / JCM 11833 / OCM 88) (Methanosarcina frisia).